Reading from the N-terminus, the 273-residue chain is Large ribosomal subunit protein uL2cz/uL2cy (273 aa).

Disordered regions lie at residues 1–23 (MAIHLYKTSTSSTRNGAVDSQVK) and 224–273 (NPVD…RRRK). Residues 262 to 273 (KYSDRFILRRRK) show a composition bias toward basic and acidic residues.

This sequence belongs to the universal ribosomal protein uL2 family. Part of the 50S ribosomal subunit.

It localises to the plastid. The protein localises to the chloroplast. This is Large ribosomal subunit protein uL2cz/uL2cy (rpl2-A) from Acorus calamus var. americanus (American sweet flag).